We begin with the raw amino-acid sequence, 118 residues long: Small ribosomal subunit protein uS13 (118 aa).

Residues 94–118 (SLPLRGQRTKTNARTRKGPRKPIRK) are disordered.

This sequence belongs to the universal ribosomal protein uS13 family. In terms of assembly, part of the 30S ribosomal subunit. Forms a loose heterodimer with protein S19. Forms two bridges to the 50S subunit in the 70S ribosome.

In terms of biological role, located at the top of the head of the 30S subunit, it contacts several helices of the 16S rRNA. In the 70S ribosome it contacts the 23S rRNA (bridge B1a) and protein L5 of the 50S subunit (bridge B1b), connecting the 2 subunits; these bridges are implicated in subunit movement. Contacts the tRNAs in the A and P-sites. This Shewanella denitrificans (strain OS217 / ATCC BAA-1090 / DSM 15013) protein is Small ribosomal subunit protein uS13.